The sequence spans 31 residues: Conotoxin (31 aa).

It belongs to the conotoxin S superfamily. In terms of processing, contains 5 disulfide bonds. In terms of tissue distribution, expressed by the venom duct.

It is found in the secreted. The protein is Conotoxin of Conus striatus (Striated cone).